The primary structure comprises 256 residues: 2-C-methyl-D-erythritol 4-phosphate cytidylyltransferase (256 aa).

The protein belongs to the IspD/TarI cytidylyltransferase family. IspD subfamily.

The enzyme catalyses 2-C-methyl-D-erythritol 4-phosphate + CTP + H(+) = 4-CDP-2-C-methyl-D-erythritol + diphosphate. The protein operates within isoprenoid biosynthesis; isopentenyl diphosphate biosynthesis via DXP pathway; isopentenyl diphosphate from 1-deoxy-D-xylulose 5-phosphate: step 2/6. In terms of biological role, catalyzes the formation of 4-diphosphocytidyl-2-C-methyl-D-erythritol from CTP and 2-C-methyl-D-erythritol 4-phosphate (MEP). This Corynebacterium glutamicum (strain R) protein is 2-C-methyl-D-erythritol 4-phosphate cytidylyltransferase.